Reading from the N-terminus, the 283-residue chain is Pantothenate synthetase (283 aa).

30–37 (MGYLHDGH) serves as a coordination point for ATP. Residue His37 is the Proton donor of the active site. Residue Gln61 coordinates (R)-pantoate. Gln61 lines the beta-alanine pocket. Residue 147-150 (GKKD) participates in ATP binding. (R)-pantoate is bound at residue Gln153. Residues Ile176 and 184–187 (MSSR) contribute to the ATP site.

This sequence belongs to the pantothenate synthetase family. As to quaternary structure, homodimer.

It localises to the cytoplasm. It catalyses the reaction (R)-pantoate + beta-alanine + ATP = (R)-pantothenate + AMP + diphosphate + H(+). Its pathway is cofactor biosynthesis; (R)-pantothenate biosynthesis; (R)-pantothenate from (R)-pantoate and beta-alanine: step 1/1. In terms of biological role, catalyzes the condensation of pantoate with beta-alanine in an ATP-dependent reaction via a pantoyl-adenylate intermediate. This Geobacter sulfurreducens (strain ATCC 51573 / DSM 12127 / PCA) protein is Pantothenate synthetase.